The chain runs to 121 residues: Neuromedin-B (121 aa).

The first 24 residues, 1–24 (MTRQAGSSWLLRGLLLFALFASGV), serve as a signal peptide directing secretion. Met56 carries the methionine amide modification. Positions 60-121 (SLEPPSLSLV…RRLLEPLLQK (62 aa)) are excised as a propeptide.

It belongs to the bombesin/neuromedin-B/ranatensin family. In terms of tissue distribution, in the hindbrain, expressed in the medulla surrounding the lateral half of the facial nucleus. Also expressed in the olfactory bulb and hippocampus. Detected in a subset of neurons distributed throughout the retrotrapezoid nucleus/parafacial respiratory group (RTN/pFRG). Within the RTN/pFRG, expressed in neuronal subpopulations distinct from those expressing Grp. Expressed in lung.

The protein resides in the secreted. It is found in the cell projection. It localises to the neuron projection. Stimulates smooth muscle contraction. Induces sighing by acting directly on the pre-Botzinger complex, a cluster of several thousand neurons in the ventrolateral medulla responsible for inspiration during respiratory activity. Contributes to the induction of sneezing following exposure to chemical irritants or allergens which causes release of NMB by nasal sensory neurons and activation of NMBR-expressing neurons in the sneeze-evoking region of the brainstem. These in turn activate neurons of the caudal ventral respiratory group, giving rise to the sneeze reflex. Contributes to induction of acute itch, possibly through activation of the NMBR receptor on dorsal root ganglion neurons. Increases expression of NMBR and steroidogenic mediators STAR, CYP11A1 and HSD3B1 in Leydig cells, induces secretion of testosterone by Leydig cells and also promotes Leydig cell proliferation. Plays a role in the innate immune response to influenza A virus infection by enhancing interferon alpha expression and reducing expression of IL6. Plays a role in CSF1-induced proliferation of osteoclast precursors by contributing to the positive regulation of the expression of the CSF1 receptor CSF1R. This is Neuromedin-B (Nmb) from Mus musculus (Mouse).